Reading from the N-terminus, the 686-residue chain is Phosphatidylinositol 4,5-bisphosphate-binding protein SLM1 (686 aa).

The segment at 33–147 is disordered; the sequence is RSMTSADHAN…KQLQGKNSLT (115 aa). Positions 45–63 are enriched in low complexity; the sequence is QQQQQQQQQQQQQQQQQQQ. The segment covering 64–126 has biased composition (polar residues); sequence SASFQNGSLT…PNIDSNTNVT (63 aa). The span at 133–144 shows a compositional bias: low complexity; it reads NNNNGKQLQGKN. Phosphoserine is present on residues Ser-145, Ser-150, and Ser-153. Residues 157–172 show a composition bias toward low complexity; it reads SSLQRQRLAQQQQQQQ. The segment at 157-176 is disordered; that stretch reads SSLQRQRLAQQQQQQQDPRS. Positions 296-381 form a coiled coil; it reads RLEDLRRDLI…FLHEAFDNLE (86 aa). Positions 468-581 constitute a PH domain; sequence YEIKSGFLER…WFDNLKILTS (114 aa). Residues 626 to 669 are disordered; it reads VENDENDDINSNYVGSTVTPKLDNQTNTNTSMSSLPDTNDSELQ. Over residues 634-663 the composition is skewed to polar residues; sequence INSNYVGSTVTPKLDNQTNTNTSMSSLPDT. Residues 673-678 carry the PXIXIT-like, required for interaction with CNA1 and CNA2, and calcineurin-dependent dephosphorylation motif; the sequence is PNIYIQ.

In terms of assembly, heterodimer of SLM1-SLM2. Binds phosphatidylinositol 4,5-bisphosphate, which is required for function. Interacts with the TORC2 subunits AVO2, BIT61 and TOR2. Interacts with the calcineurin catalytic subunits CNA1 and CNA2. Phosphorylated by the target of rapamycin complex 2 (TORC2) and dephosphorylated by serine/threonine-protein phosphatase 2B (calcineurin). Dephosphorylated in response to the disruption or inhibition of sphingolipid synthesis.

The protein localises to the cell membrane. Its function is as follows. Together with SLM2, acts as an effector of the TORC2- and calcineurin-signaling pathways. Phosphorylated and activated by TORC2 under favorable growth conditions. Mediates actin polarization via inhibition of calcineurin-dependent transcription. Upon nutrient limitation or environmental stress, gets dephosphorylated by calcineurin. Dephosphorylation inhibits its interaction with TORC2, thereby antagonizing TORC2 signaling and mediating calcineurin-dependent actin depolarization. May play a role in the response to the disruption of sphingolipid synthesis, where dephosphorylation of SLM1 leads to the activation and phosphorylation of YPK1 through the TORC2 and PKH1 pathways, which in turn phosphorylates ORM1 and LAG1 to activate sphingolipid synthesis. Also functions in heat-induced, calcineurin-mediated uracil permease (FUR4) endocytosis. The sequence is that of Phosphatidylinositol 4,5-bisphosphate-binding protein SLM1 (SLM1) from Saccharomyces cerevisiae (strain ATCC 204508 / S288c) (Baker's yeast).